A 327-amino-acid chain; its full sequence is D-alanine--D-alanine ligase (327 aa).

In terms of domain architecture, ATP-grasp spans 113–312; sequence KRLWMTHGLA…YEDFVMQVLA (200 aa). 139–194 provides a ligand contact to ATP; that stretch reads VADLGLPLIVKPAREGSSIGLTKVIAADQMRAAFEKAAGLDADVIAETFIDGAELT. D266, E279, and N281 together coordinate Mg(2+).

Belongs to the D-alanine--D-alanine ligase family. Mg(2+) serves as cofactor. Requires Mn(2+) as cofactor.

The protein resides in the cytoplasm. The enzyme catalyses 2 D-alanine + ATP = D-alanyl-D-alanine + ADP + phosphate + H(+). The protein operates within cell wall biogenesis; peptidoglycan biosynthesis. Cell wall formation. This chain is D-alanine--D-alanine ligase, found in Cupriavidus metallidurans (strain ATCC 43123 / DSM 2839 / NBRC 102507 / CH34) (Ralstonia metallidurans).